We begin with the raw amino-acid sequence, 472 residues long: Sulfate adenylyltransferase subunit 1 (472 aa).

In terms of domain architecture, tr-type G spans 24-240 (KSLLRFLTCG…ENAEVGTRDL (217 aa)). The tract at residues 33-40 (GSVDDGKS) is G1. Position 33–40 (33–40 (GSVDDGKS)) interacts with GTP. The segment at 91-95 (GITID) is G2. The tract at residues 112–115 (DTPG) is G3. GTP-binding positions include 112–116 (DTPGH) and 167–170 (NKMD). Residues 167-170 (NKMD) are G4. A G5 region spans residues 204–206 (SAL).

This sequence belongs to the TRAFAC class translation factor GTPase superfamily. Classic translation factor GTPase family. CysN/NodQ subfamily. As to quaternary structure, heterodimer composed of CysD, the smaller subunit, and CysN.

It carries out the reaction sulfate + ATP + H(+) = adenosine 5'-phosphosulfate + diphosphate. It functions in the pathway sulfur metabolism; hydrogen sulfide biosynthesis; sulfite from sulfate: step 1/3. Its function is as follows. With CysD forms the ATP sulfurylase (ATPS) that catalyzes the adenylation of sulfate producing adenosine 5'-phosphosulfate (APS) and diphosphate, the first enzymatic step in sulfur assimilation pathway. APS synthesis involves the formation of a high-energy phosphoric-sulfuric acid anhydride bond driven by GTP hydrolysis by CysN coupled to ATP hydrolysis by CysD. This chain is Sulfate adenylyltransferase subunit 1, found in Tolumonas auensis (strain DSM 9187 / NBRC 110442 / TA 4).